A 156-amino-acid chain; its full sequence is 6,7-dimethyl-8-ribityllumazine synthase (156 aa).

Residues phenylalanine 23, 57–59 (AYE), and 81–83 (AII) each bind 5-amino-6-(D-ribitylamino)uracil. (2S)-2-hydroxy-3-oxobutyl phosphate is bound at residue 86–87 (GT). The active-site Proton donor is the histidine 89. Phenylalanine 114 serves as a coordination point for 5-amino-6-(D-ribitylamino)uracil. Arginine 128 is a (2S)-2-hydroxy-3-oxobutyl phosphate binding site.

Belongs to the DMRL synthase family.

The catalysed reaction is (2S)-2-hydroxy-3-oxobutyl phosphate + 5-amino-6-(D-ribitylamino)uracil = 6,7-dimethyl-8-(1-D-ribityl)lumazine + phosphate + 2 H2O + H(+). The protein operates within cofactor biosynthesis; riboflavin biosynthesis; riboflavin from 2-hydroxy-3-oxobutyl phosphate and 5-amino-6-(D-ribitylamino)uracil: step 1/2. Functionally, catalyzes the formation of 6,7-dimethyl-8-ribityllumazine by condensation of 5-amino-6-(D-ribitylamino)uracil with 3,4-dihydroxy-2-butanone 4-phosphate. This is the penultimate step in the biosynthesis of riboflavin. This chain is 6,7-dimethyl-8-ribityllumazine synthase, found in Helicobacter pylori (strain ATCC 700392 / 26695) (Campylobacter pylori).